Reading from the N-terminus, the 180-residue chain is MSRVGNRVLVVPAGVTVDISASNFVSVTGKLGKLERAFSPKVKITLQDNTLTTQRLNEEKATKQLHGTTNALLANMLKGVSEGFQINLEIKGVGYKAELKGNKLVVAAGYSHLVTLDIPSNVEVKVPKPVEISVKGIDKQAVGAFAAVVREIRKPNPYSGKGISYKGEKIRRKEGKTASK.

Positions 158-180 are disordered; sequence YSGKGISYKGEKIRRKEGKTASK.

The protein belongs to the universal ribosomal protein uL6 family. Part of the 50S ribosomal subunit.

Functionally, this protein binds to the 23S rRNA, and is important in its secondary structure. It is located near the subunit interface in the base of the L7/L12 stalk, and near the tRNA binding site of the peptidyltransferase center. In Mycoplasmopsis synoviae (strain 53) (Mycoplasma synoviae), this protein is Large ribosomal subunit protein uL6.